The following is a 387-amino-acid chain: S-adenosylmethionine synthase (387 aa).

H17 contacts ATP. Residue D19 coordinates Mg(2+). K(+) is bound at residue E45. Residues E58 and Q101 each contribute to the L-methionine site. Residues 101-111 (QSPDIAQGVDR) form a flexible loop region. ATP contacts are provided by residues 168–170 (DAK), 234–235 (RF), D243, 249–250 (RK), A266, and K270. An L-methionine-binding site is contributed by D243. Residue K274 participates in L-methionine binding.

It belongs to the AdoMet synthase family. Homotetramer; dimer of dimers. Mg(2+) serves as cofactor. K(+) is required as a cofactor.

The protein localises to the cytoplasm. It catalyses the reaction L-methionine + ATP + H2O = S-adenosyl-L-methionine + phosphate + diphosphate. It participates in amino-acid biosynthesis; S-adenosyl-L-methionine biosynthesis; S-adenosyl-L-methionine from L-methionine: step 1/1. Catalyzes the formation of S-adenosylmethionine (AdoMet) from methionine and ATP. The overall synthetic reaction is composed of two sequential steps, AdoMet formation and the subsequent tripolyphosphate hydrolysis which occurs prior to release of AdoMet from the enzyme. This Bordetella bronchiseptica (strain ATCC BAA-588 / NCTC 13252 / RB50) (Alcaligenes bronchisepticus) protein is S-adenosylmethionine synthase.